Reading from the N-terminus, the 252-residue chain is Hydroxyacylglutathione hydrolase (252 aa).

Residues His-52, His-54, Asp-56, His-57, His-107, Asp-128, and His-166 each coordinate Zn(2+).

The protein belongs to the metallo-beta-lactamase superfamily. Glyoxalase II family. As to quaternary structure, monomer. It depends on Zn(2+) as a cofactor.

It carries out the reaction an S-(2-hydroxyacyl)glutathione + H2O = a 2-hydroxy carboxylate + glutathione + H(+). It functions in the pathway secondary metabolite metabolism; methylglyoxal degradation; (R)-lactate from methylglyoxal: step 2/2. Its function is as follows. Thiolesterase that catalyzes the hydrolysis of S-D-lactoyl-glutathione to form glutathione and D-lactic acid. This Neisseria meningitidis serogroup C / serotype 2a (strain ATCC 700532 / DSM 15464 / FAM18) protein is Hydroxyacylglutathione hydrolase.